A 475-amino-acid chain; its full sequence is Aspartyl/glutamyl-tRNA(Asn/Gln) amidotransferase subunit B (475 aa).

The protein belongs to the GatB/GatE family. GatB subfamily. As to quaternary structure, heterotrimer of A, B and C subunits.

It catalyses the reaction L-glutamyl-tRNA(Gln) + L-glutamine + ATP + H2O = L-glutaminyl-tRNA(Gln) + L-glutamate + ADP + phosphate + H(+). The enzyme catalyses L-aspartyl-tRNA(Asn) + L-glutamine + ATP + H2O = L-asparaginyl-tRNA(Asn) + L-glutamate + ADP + phosphate + 2 H(+). Allows the formation of correctly charged Asn-tRNA(Asn) or Gln-tRNA(Gln) through the transamidation of misacylated Asp-tRNA(Asn) or Glu-tRNA(Gln) in organisms which lack either or both of asparaginyl-tRNA or glutaminyl-tRNA synthetases. The reaction takes place in the presence of glutamine and ATP through an activated phospho-Asp-tRNA(Asn) or phospho-Glu-tRNA(Gln). The protein is Aspartyl/glutamyl-tRNA(Asn/Gln) amidotransferase subunit B of Clostridium novyi (strain NT).